The sequence spans 366 residues: tRNA 2-selenouridine synthase (366 aa).

The Rhodanese domain occupies 14 to 137; sequence LLENRPLIDV…IRSFLINTIE (124 aa). The active-site S-selanylcysteine intermediate is Cys97.

The protein belongs to the SelU family. In terms of assembly, monomer.

The enzyme catalyses 5-methylaminomethyl-2-thiouridine(34) in tRNA + selenophosphate + (2E)-geranyl diphosphate + H2O + H(+) = 5-methylaminomethyl-2-selenouridine(34) in tRNA + (2E)-thiogeraniol + phosphate + diphosphate. The catalysed reaction is 5-methylaminomethyl-2-thiouridine(34) in tRNA + (2E)-geranyl diphosphate = 5-methylaminomethyl-S-(2E)-geranyl-thiouridine(34) in tRNA + diphosphate. It catalyses the reaction 5-methylaminomethyl-S-(2E)-geranyl-thiouridine(34) in tRNA + selenophosphate + H(+) = 5-methylaminomethyl-2-(Se-phospho)selenouridine(34) in tRNA + (2E)-thiogeraniol. It carries out the reaction 5-methylaminomethyl-2-(Se-phospho)selenouridine(34) in tRNA + H2O = 5-methylaminomethyl-2-selenouridine(34) in tRNA + phosphate. Its function is as follows. Involved in the post-transcriptional modification of the uridine at the wobble position (U34) of tRNA(Lys), tRNA(Glu) and tRNA(Gln). Catalyzes the conversion of 2-thiouridine (S2U-RNA) to 2-selenouridine (Se2U-RNA). Acts in a two-step process involving geranylation of 2-thiouridine (S2U) to S-geranyl-2-thiouridine (geS2U) and subsequent selenation of the latter derivative to 2-selenouridine (Se2U) in the tRNA chain. The protein is tRNA 2-selenouridine synthase of Shewanella frigidimarina (strain NCIMB 400).